The sequence spans 430 residues: MIOREX complex component 4 (430 aa).

The transit peptide at M1–T27 directs the protein to the mitochondrion. Residues F403–Y420 form a helical membrane-spanning segment.

As to quaternary structure, associates with the mitochondrial ribosome.

It localises to the mitochondrion. It is found in the mitochondrion membrane. In terms of biological role, component of MIOREX complexes, large expressome-like assemblies of ribosomes with factors involved in all the steps of post-transcriptional gene expression. The protein is MIOREX complex component 4 of Saccharomyces cerevisiae (strain ATCC 204508 / S288c) (Baker's yeast).